A 175-amino-acid polypeptide reads, in one-letter code: Translation initiation factor IF-3 (175 aa).

Belongs to the IF-3 family. In terms of assembly, monomer.

The protein localises to the cytoplasm. Functionally, IF-3 binds to the 30S ribosomal subunit and shifts the equilibrium between 70S ribosomes and their 50S and 30S subunits in favor of the free subunits, thus enhancing the availability of 30S subunits on which protein synthesis initiation begins. This chain is Translation initiation factor IF-3, found in Staphylococcus aureus (strain MRSA252).